Consider the following 552-residue polypeptide: Arginine--tRNA ligase (552 aa).

The 'HIGH' region signature appears at 130–140 (ANPTGPLSIGH).

It belongs to the class-I aminoacyl-tRNA synthetase family. As to quaternary structure, monomer.

The protein resides in the cytoplasm. It catalyses the reaction tRNA(Arg) + L-arginine + ATP = L-arginyl-tRNA(Arg) + AMP + diphosphate. This chain is Arginine--tRNA ligase, found in Desulfotalea psychrophila (strain LSv54 / DSM 12343).